We begin with the raw amino-acid sequence, 53 residues long: MIVLGWMLFVGLATYMGTFPEAMPPTLKWKERLPGQENKARRRIQALEEELLL.

Mitochondrial intermembrane segments lie at residues 1 to 6 (MIVLGW) and 1 to 7 (MIVLGWM). The next 2 membrane-spanning stretches (helical) occupy residues 7–23 (MLFVGLATYMGTFPEAM) and 8–24 (LFVGLATYMGTFPEAMP). 2 consecutive stretches face the cytoplasmic side: residues 24–53 (PPTLKWKERLPGQENKARRRIQALEEELLL) and 25–40 (PTLKWKERLPGQENKA).

In terms of assembly, interacts with VDAC3. In terms of tissue distribution, testis specific. Detected only in germ cells at the step of spermiogenesis (at protein level). Expressed during the middle steps of spermatid development. Testis specific. Detected only in germ cells at the step of spermiogenesis (at protein level). Expressed in the late steps of spermatid development.

It is found in the mitochondrion outer membrane. In terms of biological role, regulates sperm development. May be involved in mitochondrial sheath formation. This chain is Mitochondrial sheath formation-associated protein, found in Mus musculus (Mouse).